Consider the following 200-residue polypeptide: MTTHRKPSQEQGFLNGQFLLAMPGMSDERFARSVVYICAHSDEGAMGFIINQLQPVQFPDLLRQIGVIGEEDLIILPDRAQHMVVRNGGPVDRTRGFVLHSDDYMVDSTMPVSDDVCLTATVDILRAIYGGGGPERALMALGYSGWAPGQLEMEVAENGWLTCDAPLDMLFDSDIEGKYSRLMLHMGIDMSRLVSDAGHA.

It belongs to the UPF0301 (AlgH) family.

The polypeptide is UPF0301 protein BR0480/BS1330_I0481 (Brucella suis biovar 1 (strain 1330)).